A 169-amino-acid polypeptide reads, in one-letter code: Cell division inhibitor SulA (169 aa).

The span at 1 to 16 shows a compositional bias: polar residues; it reads MFTSAHANRSPLTSAS. Residues 1 to 20 form a disordered region; the sequence is MFTSAHANRSPLTSASVRRP. The interval 106–112 is ftsZ binding; sequence ALRTGNY. Positions 162–169 are lon protease binding; that stretch reads KIHSNLYH.

This sequence belongs to the SulA family. Interacts with FtsZ. Is rapidly cleaved and degraded by the Lon protease once DNA damage is repaired.

In terms of biological role, component of the SOS system and an inhibitor of cell division. Accumulation of SulA causes rapid cessation of cell division and the appearance of long, non-septate filaments. In the presence of GTP, binds a polymerization-competent form of FtsZ in a 1:1 ratio, thus inhibiting FtsZ polymerization and therefore preventing it from participating in the assembly of the Z ring. This mechanism prevents the premature segregation of damaged DNA to daughter cells during cell division. In Klebsiella aerogenes (Enterobacter aerogenes), this protein is Cell division inhibitor SulA.